The primary structure comprises 471 residues: E3 SUMO-protein ligase EGR2 (471 aa).

Residues 127-143 (PASTTASSNVTSASPNP) are compositionally biased toward low complexity. The interval 127–177 (PASTTASSNVTSASPNPLATGPLGVCTMSQTQPDLDHLYSPPPPPPYSGCA) is disordered. An N6-acetyllysine; by EP300 modification is found at K246. 2 disordered regions span residues 273-301 (GGPSAGTTGPGASGGSEGPRLPGSSAAAA) and 313-336 (RPILRPRKYPNRPSKTPVHERPYP). Positions 280-289 (TGPGASGGSE) are enriched in gly residues. 3 consecutive C2H2-type zinc fingers follow at residues 335–359 (YPCPAEGCDRRFSRSDELTRHIRIH), 365–387 (FQCRICMRNFSRSDHLTTHIRTH), and 393–415 (FACDYCGRKFARSDERKRHTKIH). Positions 406–471 (DERKRHTKIH…GPCSSRTRTP (66 aa)) are disordered. The span at 410–420 (RHTKIHLRQKE) shows a compositional bias: basic residues. Residues 424 to 437 (SAPSSSVPAASTAS) are compositionally biased toward low complexity.

It belongs to the EGR C2H2-type zinc-finger protein family. Interacts with HCFC1. Interacts with WWP2. Interacts with UBC9. Interacts with CITED1. Interacts (via phosphorylated form) with SFN. In terms of processing, ubiquitinated by WWP2 leading to proteasomal degradation. Acetylated at Lys-246. May be deacetylated by HDAC6, HDAC10 or SIRT1.

The protein resides in the nucleus. It participates in protein modification; protein sumoylation. In terms of biological role, sequence-specific DNA-binding transcription factor. Plays a role in hindbrain segmentation by regulating the expression of a subset of homeobox containing genes and in Schwann cell myelination by regulating the expression of genes involved in the formation and maintenance of myelin. Binds to two EGR2-consensus sites EGR2A (5'-CTGTAGGAG-3') and EGR2B (5'-ATGTAGGTG-3') in the HOXB3 enhancer and promotes HOXB3 transcriptional activation. Binds to specific DNA sites located in the promoter region of HOXA4, HOXB2 and ERBB2. Regulates hindbrain segmentation by controlling the expression of Hox genes, such as HOXA4, HOXB3 and HOXB2, and thereby specifying odd and even rhombomeres. Promotes the expression of HOXB3 in the rhombomere r5 in the hindbrain. Regulates myelination in the peripheral nervous system after birth, possibly by regulating the expression of myelin proteins, such as MPZ, and by promoting the differentiation of Schwann cells. Involved in the development of the jaw openener musculature, probably by playing a role in its innervation through trigeminal motor neurons. May play a role in adipogenesis, possibly by regulating the expression of CEBPB. Its function is as follows. E3 SUMO-protein ligase helping SUMO1 conjugation to its coregulators NAB1 and NAB2, whose sumoylation down-regulates EGR2 transcriptional activity. This chain is E3 SUMO-protein ligase EGR2 (EGR2), found in Sus scrofa (Pig).